We begin with the raw amino-acid sequence, 321 residues long: Lipoyl synthase (321 aa).

[4Fe-4S] cluster contacts are provided by Cys-68, Cys-73, Cys-79, Cys-94, Cys-98, Cys-101, and Ser-308. The region spanning 80 to 297 (FNHGTATFMI…KAEAMAMGFT (218 aa)) is the Radical SAM core domain.

Belongs to the radical SAM superfamily. Lipoyl synthase family. Requires [4Fe-4S] cluster as cofactor.

It is found in the cytoplasm. The catalysed reaction is [[Fe-S] cluster scaffold protein carrying a second [4Fe-4S](2+) cluster] + N(6)-octanoyl-L-lysyl-[protein] + 2 oxidized [2Fe-2S]-[ferredoxin] + 2 S-adenosyl-L-methionine + 4 H(+) = [[Fe-S] cluster scaffold protein] + N(6)-[(R)-dihydrolipoyl]-L-lysyl-[protein] + 4 Fe(3+) + 2 hydrogen sulfide + 2 5'-deoxyadenosine + 2 L-methionine + 2 reduced [2Fe-2S]-[ferredoxin]. Its pathway is protein modification; protein lipoylation via endogenous pathway; protein N(6)-(lipoyl)lysine from octanoyl-[acyl-carrier-protein]: step 2/2. Functionally, catalyzes the radical-mediated insertion of two sulfur atoms into the C-6 and C-8 positions of the octanoyl moiety bound to the lipoyl domains of lipoate-dependent enzymes, thereby converting the octanoylated domains into lipoylated derivatives. In Yersinia pseudotuberculosis serotype O:1b (strain IP 31758), this protein is Lipoyl synthase.